Reading from the N-terminus, the 1105-residue chain is Lysylphosphatidylglycerol biosynthesis bifunctional protein LysX (1105 aa).

Residues 1 to 603 form a phosphatidylglycerol lysyltransferase region; the sequence is MTVTKPRSVQ…LLHHDGSAPD (603 aa). 7 helical membrane passes run 20 to 40, 62 to 82, 86 to 106, 117 to 137, 154 to 174, 186 to 203, and 208 to 228; these read VPAA…LASI, FPDT…ALAA, IAWL…AADI, FGEN…VLGY, AVLV…VELF, YVAN…DLFT, and VFLN…ATIV. The interval 604-1105 is lysine--tRNA ligase; it reads VSGLRQSAIA…TLPFPLAKPH (502 aa). 2 residues coordinate Mg(2+): aspartate 1017 and glutamate 1024.

The protein in the N-terminal section; belongs to the LPG synthetase family. It in the C-terminal section; belongs to the class-II aminoacyl-tRNA synthetase family. The cofactor is Mg(2+).

Its subcellular location is the cell membrane. The catalysed reaction is tRNA(Lys) + L-lysine + ATP = L-lysyl-tRNA(Lys) + AMP + diphosphate. The enzyme catalyses L-lysyl-tRNA(Lys) + a 1,2-diacyl-sn-glycero-3-phospho-(1'-sn-glycerol) = a 1,2-diacyl-sn-glycero-3-phospho-1'-(3'-O-L-lysyl)-sn-glycerol + tRNA(Lys). In terms of biological role, catalyzes the production of L-lysyl-tRNA(Lys)transfer and the transfer of a lysyl group from L-lysyl-tRNA(Lys) to membrane-bound phosphatidylglycerol (PG), which produces lysylphosphatidylglycerol (LPG), one of the components of the bacterial membrane with a positive net charge. LPG synthesis contributes to the resistance to cationic antimicrobial peptides (CAMPs) and likely protects M.tuberculosis against the CAMPs produced by competiting microorganisms (bacteriocins). In fact, the modification of anionic phosphatidylglycerol with positively charged L-lysine results in repulsion of the peptides. This chain is Lysylphosphatidylglycerol biosynthesis bifunctional protein LysX (lysX), found in Mycobacterium marinum (strain ATCC BAA-535 / M).